Here is a 113-residue protein sequence, read N- to C-terminus: Guanylate cyclase activator 2B (113 aa).

The N-terminal stretch at 1 to 27 is a signal peptide; the sequence is MASRAAAGLLLCGVALVFLVLLQGTQS. Residues 28–97 constitute a propeptide that is removed on maturation; the sequence is VYIQYQGFRV…SIFQALRTIA (70 aa). Disulfide bonds link Cys-68/Cys-81, Cys-101/Cys-109, and Cys-104/Cys-112.

This sequence belongs to the guanylin family.

The protein resides in the secreted. Functionally, endogenous activator of intestinal guanylate cyclase. It stimulates this enzyme through the same receptor binding region as the heat-stable enterotoxins. May be a potent physiological regulator of intestinal fluid and electrolyte transport. May be an autocrine/paracrine regulator of intestinal salt and water transport. This is Guanylate cyclase activator 2B (GUCA2B) from Sus scrofa (Pig).